The following is a 343-amino-acid chain: Leucine-rich repeat-containing protein 23 (343 aa).

Over residues 1–30 (MSDEDDLEDSEPDQDDSEKEEDEKETEEGE) the composition is skewed to acidic residues. Positions 1 to 47 (MSDEDDLEDSEPDQDDSEKEEDEKETEEGEDYRKEGEEFPEEWLPTP) are disordered. LRR repeat units follow at residues 92–113 (HLRY…NYLT), 114–134 (HLLW…NELP), 135–155 (YLQI…ISHP), 156–177 (RLET…DPEK), 180–200 (SLHT…INLP), 201–222 (KLKN…EDLS), 223–244 (NLTT…SREM), and 246–267 (SLQY…AKLR). The segment at 208 to 343 (AQNMLKKVEG…RDLEPEQSLI (136 aa)) is interaction with RSPH9. An LRRCT domain is found at 280-318 (NPCTDETSYRQEALVQMPYLERLDKEFYEEEERAEADVI). Residues 307 to 329 (YEEEERAEADVIRQRLKEEKEQE) adopt a coiled-coil conformation. Residues 318 to 337 (IRQRLKEEKEQEPEPQRDLE) show a composition bias toward basic and acidic residues. The interval 318-343 (IRQRLKEEKEQEPEPQRDLEPEQSLI) is disordered.

Component of the axonemal radial spoke complex. Interacts with RSPH3. Interacts with RSPH9. Expressed in spermatozoa.

The protein resides in the cell projection. It is found in the cilium. Its subcellular location is the flagellum. The protein localises to the cytoplasm. It localises to the cytoskeleton. The protein resides in the flagellum axoneme. Functionally, essential for sperm motility and male fertility. Plays an important role in the proper assembly of the third radial spoke (RS3) head and the bridge structure between RS2 and RS3 in the sperm flagella. The chain is Leucine-rich repeat-containing protein 23 (LRRC23) from Homo sapiens (Human).